The sequence spans 728 residues: Catalase-peroxidase (728 aa).

The tract at residues 1-26 is disordered; sequence MDNPTDTAGKCPVAHGNKPRGPSNRD. Positions 96-218 form a cross-link, tryptophyl-tyrosyl-methioninium (Trp-Tyr) (with M-244); it reads WHSAGTYRIT…LGAVQMGLIY (123 aa). The active-site Proton acceptor is H97. The segment at residues 218–244 is a cross-link (tryptophyl-tyrosyl-methioninium (Tyr-Met) (with W-96)); sequence YVNPEGPNGNPDPVAAARDIRETFARM. H259 lines the heme b pocket.

The protein belongs to the peroxidase family. Peroxidase/catalase subfamily. Homodimer or homotetramer. Heme b is required as a cofactor. Formation of the three residue Trp-Tyr-Met cross-link is important for the catalase, but not the peroxidase activity of the enzyme.

It catalyses the reaction H2O2 + AH2 = A + 2 H2O. The enzyme catalyses 2 H2O2 = O2 + 2 H2O. Functionally, bifunctional enzyme with both catalase and broad-spectrum peroxidase activity. Important for stationary phase survival. The sequence is that of Catalase-peroxidase from Rhizobium etli (strain ATCC 51251 / DSM 11541 / JCM 21823 / NBRC 15573 / CFN 42).